The sequence spans 601 residues: Protein NRT1/ PTR FAMILY 4.4 (601 aa).

A run of 2 helical transmembrane segments spans residues A44 to N64 and A82 to L102. The residue at position 112 (T112) is a Phosphothreonine. Transmembrane regions (helical) follow at residues M113–L133, T160–I180, F198–V218, V228–T248, I337–Q357, A386–L406, L420–V440, V453–F473, F493–V513, and H544–S564.

Belongs to the major facilitator superfamily. Proton-dependent oligopeptide transporter (POT/PTR) (TC 2.A.17) family. Expressed in shoots, roots and stems.

It localises to the membrane. The chain is Protein NRT1/ PTR FAMILY 4.4 (NPF4.4) from Arabidopsis thaliana (Mouse-ear cress).